Reading from the N-terminus, the 205-residue chain is Thymidylate kinase (205 aa).

10 to 17 (GIDGAGKT) is an ATP binding site.

The protein belongs to the thymidylate kinase family.

It catalyses the reaction dTMP + ATP = dTDP + ADP. Phosphorylation of dTMP to form dTDP in both de novo and salvage pathways of dTTP synthesis. In Nitrosospira multiformis (strain ATCC 25196 / NCIMB 11849 / C 71), this protein is Thymidylate kinase.